Reading from the N-terminus, the 555-residue chain is GPI-anchor transamidase component PIGS (555 aa).

Topologically, residues 2 to 18 (AAAGAAATDLEVVRGKR) are cytoplasmic. A cardiolipin is bound by residues arginine 15 and arginine 18. The helical transmembrane segment at 19 to 39 (SALFFAAVAILLGLPLWWKTT) threads the bilayer. Topologically, residues 40–517 (ETYRAPLPYS…LHLLYFPDDQ (478 aa)) are lumenal. Residues asparagine 267 and asparagine 370 are each glycosylated (N-linked (GlcNAc...) asparagine). A helical membrane pass occupies residues 518-532 (KFAIYIPLFLPMAVP). Topologically, residues 533-555 (ILLSLVKIFQETRKSWKKPEKID) are cytoplasmic.

Belongs to the PIGS family. In terms of assembly, heteropentamer. Part of the GPI-anchor transamidase complex, consisting of PIGK, PIGT, PIGS, PIGU and GAA1.

The protein resides in the endoplasmic reticulum membrane. Its pathway is glycolipid biosynthesis; glycosylphosphatidylinositol-anchor biosynthesis. Functionally, component of the glycosylphosphatidylinositol-anchor (GPI-anchor) transamidase (GPI-T) complex that catalyzes the formation of the linkage between a proprotein and a GPI-anchor and participates in GPI anchored protein biosynthesis. In Mus musculus (Mouse), this protein is GPI-anchor transamidase component PIGS.